Here is a 317-residue protein sequence, read N- to C-terminus: MPKRGKRAAAEDGEEPKSEPETKKSKGAAKKTEKEAAGEGPVLYEDPPDQKTSASGKSATLKICSWNVDGLRAWIKKKGLDWVKEEAPDILCLQETKCSENKLPAELQELPGLTHQYWSAPSDKEGYSGVGLLSRQCPLKVSYGIGEEEHDQEGRVIVAEFESFILVTAYVPNAGRGLVRLEYRQRWDEAFRKFLKDLASRKPLVLCGDLNVAHEEIDLRNPKGNKKNAGFTPQERQGFGEMLQAVPLADSFRHLYPNTAYAYTFWTYMMNARSKNVGWRLDYFLLSHSLLPALCDSKIRSKALGSDHCPITLYLAL.

Residues 1–32 (MPKRGKRAAAEDGEEPKSEPETKKSKGAAKKT) form a necessary for interaction with YBX1, binding to RNA, association together with NPM1 to rRNA, endoribonuclease activity on abasic RNA and localization in the nucleoli region. Residues 1–57 (MPKRGKRAAAEDGEEPKSEPETKKSKGAAKKTEKEAAGEGPVLYEDPPDQKTSASGK) form a disordered region. The residue at position 6 (lysine 6) is an N6-acetyllysine; by EP300. Residues 8–12 (AAAED) carry the Nuclear localization signal (NLS) motif. Over residues 15-37 (EPKSEPETKKSKGAAKKTEKEAA) the composition is skewed to basic and acidic residues. Serine 18 is subject to Phosphoserine. A necessary for interaction with NPM1 and for efficient rRNA binding region spans residues 22-32 (TKKSKGAAKKT). N6-acetyllysine occurs at positions 26, 30, 31, and 34. Position 53 is a phosphoserine (serine 53). The short motif at 63-79 (ICSWNVDGLRAWIKKKG) is the Nuclear export signal (NES) element. At cysteine 64 the chain carries S-nitrosocysteine; alternate. Cysteines 64 and 92 form a disulfide. Mg(2+) is bound at residue aspartate 69. At cysteine 92 the chain carries S-nitrosocysteine; alternate. Glutamate 95 is a binding site for Mg(2+). Tyrosine 170 is a catalytic residue. Residue lysine 196 is modified to N6-acetyllysine. Mg(2+)-binding residues include aspartate 209 and asparagine 211. The active-site Proton donor/acceptor is the aspartate 209. Threonine 232 carries the phosphothreonine; by CDK5 modification. A mitochondrial targeting sequence (MTS) region spans residues 288 to 317 (HSLLPALCDSKIRSKALGSDHCPITLYLAL). Aspartate 307 lines the Mg(2+) pocket. Cysteine 309 bears the S-nitrosocysteine mark.

Belongs to the DNA repair enzymes AP/ExoA family. As to quaternary structure, monomer. Homodimer; disulfide-linked. Component of the SET complex, composed of at least APEX1, SET, ANP32A, HMGB2, NME1 and TREX1. Associates with the dimer XRCC5/XRCC6 in a DNA-dependent manner. Interacts with SIRT1; the interaction is increased in the context of genotoxic stress. Interacts with HDAC1, HDAC2 and HDAC3; the interactions are not dependent on the APEX1 acetylation status. Interacts with XRCC1; the interaction is induced by SIRT1 and increased with the APEX1 acetylated form. Interacts with NPM1 (via N-terminal domain); the interaction is RNA-dependent and decreases in hydrogen peroxide-damaged cells. Interacts (via N-terminus) with YBX1 (via C-terminus); the interaction is increased in presence of APEX1 acetylated. Interacts with HNRNPL; the interaction is DNA-dependent. Interacts (via N-terminus) with KPNA1 and KPNA2. Interacts with TXN; the interaction stimulates the FOS/JUN AP-1 complex DNA-binding activity in a redox-dependent manner. Interacts with GZMA, KRT8, MDM2, POLB, PRDX6, PRPF19, RPLP0, TOMM20 and WDR77. Binds to CDK5. It depends on Mg(2+) as a cofactor. Requires Mn(2+) as cofactor. Post-translationally, phosphorylated. Phosphorylation by kinase PKC or casein kinase CK2 results in enhanced redox activity that stimulates binding of the FOS/JUN AP-1 complex to its cognate binding site. AP-endodeoxyribonuclease activity is not affected by CK2-mediated phosphorylation. Phosphorylation of Thr-232 by CDK5 in response to MPP(+)/MPTP (1-methyl-4-phenylpyridinium) reduces AP-endodeoxyribonuclease activity resulting in accumulation of DNA damage and contributing to neuronal death. Acetylated on Lys-6. Acetylation is increased by the transcriptional coactivator EP300 acetyltransferase, genotoxic agents like H(2)O(2) and methyl methanesulfonate (MMS). Acetylation increases its binding affinity to the negative calcium response element (nCaRE) DNA promoter. The acetylated form induces a stronger binding of YBX1 to the Y-box sequence in the MDR1 promoter than the unacetylated form. Deacetylated on lysines. Lys-6 is deacetylated by SIRT1. In terms of processing, cleaved at Lys-30 by granzyme A to create the mitochondrial form; leading in reduction of binding to DNA, AP endodeoxyribonuclease activity, redox activation of transcription factors and to enhanced cell death. Cleaved by granzyme K; leading to intracellular ROS accumulation and enhanced cell death after oxidative stress. Post-translationally, cys-64 and Cys-92 are nitrosylated in response to nitric oxide (NO) and lead to the exposure of the nuclear export signal (NES). Ubiquitinated by MDM2; leading to translocation to the cytoplasm and proteasomal degradation.

The protein resides in the nucleus. It is found in the nucleolus. It localises to the nucleus speckle. Its subcellular location is the endoplasmic reticulum. The protein localises to the cytoplasm. The protein resides in the mitochondrion. The catalysed reaction is a deoxyribonucleotide-2'-deoxyribose-5'-monophosphate-DNA + H2O = a 5'-end 2'-deoxyribose-5'-monophosphate-DNA + a 3'-end 2'-deoxyribonucleotide-DNA + H(+). It catalyses the reaction Exonucleolytic cleavage in the 3'- to 5'-direction to yield nucleoside 5'-phosphates.. The enzyme catalyses a 3'-end 2'-deoxyribonucleotide-3'-phosphoglycolate-DNA + H2O = 2-phosphoglycolate + a 3'-end 2'-deoxyribonucleotide-DNA + H(+). It carries out the reaction a 3'-end 2'-deoxyribonucleotide-8-oxoguanine-DNA + H2O = 8-oxo-dGMP + a 3'-end 2'-deoxyribonucleotide-DNA + H(+). NPM1 stimulates endodeoxyribonuclease activity on double-stranded DNA with AP sites, but inhibits endoribonuclease activity on single-stranded RNA containing AP sites. Functionally, multifunctional protein that plays a central role in the cellular response to oxidative stress. The two major activities of APEX1 are DNA repair and redox regulation of transcriptional factors. Functions as an apurinic/apyrimidinic (AP) endodeoxyribonuclease in the base excision repair (BER) pathway of DNA lesions induced by oxidative and alkylating agents. Initiates repair of AP sites in DNA by catalyzing hydrolytic incision of the phosphodiester backbone immediately adjacent to the damage, generating a single-strand break with 5'-deoxyribose phosphate and 3'-hydroxyl ends. Also incises at AP sites in the DNA strand of DNA/RNA hybrids, single-stranded DNA regions of R-loop structures, and single-stranded RNA molecules. Operates at switch sites of immunoglobulin (Ig) constant regions where it mediates Ig isotype class switch recombination. Processes AP sites induced by successive action of AICDA and UNG. Generates staggered nicks in opposite DNA strands resulting in the formation of double-strand DNA breaks that are finally resolved via non-homologous end joining repair pathway. Has 3'-5' exodeoxyribonuclease activity on mismatched deoxyribonucleotides at the 3' termini of nicked or gapped DNA molecules during short-patch BER. Possesses DNA 3' phosphodiesterase activity capable of removing lesions (such as phosphoglycolate and 8-oxoguanine) blocking the 3' side of DNA strand breaks. Also acts as an endoribonuclease involved in the control of single-stranded RNA metabolism. Plays a role in regulating MYC mRNA turnover by preferentially cleaving in between UA and CA dinucleotides of the MYC coding region determinant (CRD). In association with NMD1, plays a role in the rRNA quality control process during cell cycle progression. Acts as a loading factor for POLB onto non-incised AP sites in DNA and stimulates the 5'-terminal deoxyribose 5'-phosphate (dRp) excision activity of POLB. Exerts reversible nuclear redox activity to regulate DNA binding affinity and transcriptional activity of transcriptional factors by controlling the redox status of their DNA-binding domain, such as the FOS/JUN AP-1 complex after exposure to IR. Involved in calcium-dependent down-regulation of parathyroid hormone (PTH) expression by binding to negative calcium response elements (nCaREs). Together with HNRNPL or the dimer XRCC5/XRCC6, associates with nCaRE, acting as an activator of transcriptional repression. May also play a role in the epigenetic regulation of gene expression by participating in DNA demethylation. Stimulates the YBX1-mediated MDR1 promoter activity, when acetylated at Lys-6 and Lys-7, leading to drug resistance. Plays a role in protection from granzyme-mediated cellular repair leading to cell death. Binds DNA and RNA. Associates, together with YBX1, on the MDR1 promoter. Together with NPM1, associates with rRNA. This is DNA repair nuclease/redox regulator APEX1 (Apex1) from Rattus norvegicus (Rat).